A 393-amino-acid polypeptide reads, in one-letter code: tRNA(Met) cytidine acetate ligase (393 aa).

Residues Gly-81, Asn-142, and Arg-167 each coordinate ATP.

The protein belongs to the TmcAL family.

The protein localises to the cytoplasm. It carries out the reaction cytidine(34) in elongator tRNA(Met) + acetate + ATP = N(4)-acetylcytidine(34) in elongator tRNA(Met) + AMP + diphosphate. Functionally, catalyzes the formation of N(4)-acetylcytidine (ac(4)C) at the wobble position of elongator tRNA(Met), using acetate and ATP as substrates. First activates an acetate ion to form acetyladenylate (Ac-AMP) and then transfers the acetyl group to tRNA to form ac(4)C34. The polypeptide is tRNA(Met) cytidine acetate ligase (Bacillus cytotoxicus (strain DSM 22905 / CIP 110041 / 391-98 / NVH 391-98)).